The following is a 362-amino-acid chain: Chorismate synthase (362 aa).

Residues arginine 48 and arginine 54 each contribute to the NADP(+) site. Residues 131–133, 243–244, glycine 287, 302–306, and arginine 328 contribute to the FMN site; these read RSS, NA, and KPTSS.

This sequence belongs to the chorismate synthase family. Homotetramer. Requires FMNH2 as cofactor.

The enzyme catalyses 5-O-(1-carboxyvinyl)-3-phosphoshikimate = chorismate + phosphate. It participates in metabolic intermediate biosynthesis; chorismate biosynthesis; chorismate from D-erythrose 4-phosphate and phosphoenolpyruvate: step 7/7. Catalyzes the anti-1,4-elimination of the C-3 phosphate and the C-6 proR hydrogen from 5-enolpyruvylshikimate-3-phosphate (EPSP) to yield chorismate, which is the branch point compound that serves as the starting substrate for the three terminal pathways of aromatic amino acid biosynthesis. This reaction introduces a second double bond into the aromatic ring system. In Bradyrhizobium diazoefficiens (strain JCM 10833 / BCRC 13528 / IAM 13628 / NBRC 14792 / USDA 110), this protein is Chorismate synthase.